A 140-amino-acid chain; its full sequence is Gastrula zinc finger protein XlCGF49.1 (140 aa).

5 C2H2-type zinc fingers span residues 6–28 (FTCM…YKIH), 34–56 (FTCM…YKMH), 62–84 (FSCS…QKIH), 90–112 (YACT…WKIH), and 118–140 (FSCT…QKMH).

This sequence belongs to the krueppel C2H2-type zinc-finger protein family.

Its subcellular location is the nucleus. In terms of biological role, may be involved in transcriptional regulation. The protein is Gastrula zinc finger protein XlCGF49.1 of Xenopus laevis (African clawed frog).